The sequence spans 451 residues: Alpha-galactosidase (451 aa).

5–71 (PKITFIGAGS…ASGRITCHTN (67 aa)) contacts NAD(+). Asparagine 151 is a binding site for substrate. Position 173 (cysteine 173) interacts with Mn(2+). Histidine 174 functions as the Proton donor in the catalytic mechanism. Histidine 203 serves as a coordination point for Mn(2+). Residue arginine 287 participates in substrate binding.

It belongs to the glycosyl hydrolase 4 family. Homodimer. It depends on Mn(2+) as a cofactor. NAD(+) serves as cofactor.

It catalyses the reaction Hydrolysis of terminal, non-reducing alpha-D-galactose residues in alpha-D-galactosides, including galactose oligosaccharides, galactomannans and galactolipids.. The protein is Alpha-galactosidase (melA) of Salmonella typhimurium (strain LT2 / SGSC1412 / ATCC 700720).